Reading from the N-terminus, the 287-residue chain is Ribosomal RNA small subunit methyltransferase I (287 aa).

The protein belongs to the methyltransferase superfamily. RsmI family.

The protein localises to the cytoplasm. The enzyme catalyses cytidine(1402) in 16S rRNA + S-adenosyl-L-methionine = 2'-O-methylcytidine(1402) in 16S rRNA + S-adenosyl-L-homocysteine + H(+). Its function is as follows. Catalyzes the 2'-O-methylation of the ribose of cytidine 1402 (C1402) in 16S rRNA. In Streptococcus pyogenes serotype M3 (strain ATCC BAA-595 / MGAS315), this protein is Ribosomal RNA small subunit methyltransferase I.